The chain runs to 317 residues: Apolipoprotein E (317 aa).

Residues 1–18 (MKVLWAALLVTFLAGCQA) form the signal peptide. 8 repeat units span residues 80 to 101 (ALMD…EQLT), 102 to 123 (PVAE…ARLG), 124 to 145 (ADME…AMLG), 146 to 167 (QSTE…KRLL), 168 to 189 (RDAD…EGAE), 190 to 211 (RGVS…VRAA), 212 to 233 (TVGS…ERLR), and 234 to 255 (ARME…EQVA). An 8 X 22 AA approximate tandem repeats region spans residues 80 to 255 (ALMDETMKEL…RLDEVKEQVA (176 aa)). Met143 carries the methionine sulfoxide modification. The residue at position 147 (Ser147) is a Phosphoserine. The segment at 158–168 (HLRKLRKRLLR) is LDL and other lipoprotein receptors binding. 162 to 165 (LRKR) is a heparin binding site. The interval 210-290 (AATVGSLAGQ…SWFEPLVEDM (81 aa)) is lipid-binding and lipoprotein association. Residue 229–236 (GERLRARM) participates in heparin binding. Positions 266–317 (QQIRLQAEAFQARLKSWFEPLVEDMQRQWAGLVEKVQAAMGTSAAPVPSDNH) are homooligomerization. A specificity for association with VLDL region spans residues 278–290 (RLKSWFEPLVEDM).

It belongs to the apolipoprotein A1/A4/E family. Homotetramer. May interact with ABCA1; functionally associated with ABCA1 in the biogenesis of HDLs. May interact with APP/A4 amyloid-beta peptide; the interaction is extremely stable in vitro but its physiological significance is unclear. May interact with MAPT. May interact with MAP2. In the cerebrospinal fluid, interacts with secreted SORL1. Interacts with PMEL; this allows the loading of PMEL luminal fragment on ILVs to induce fibril nucleation. In terms of processing, APOE exists as multiple glycosylated and sialylated glycoforms within cells and in plasma. The extent of glycosylation and sialylation are tissue and context specific. Glycated in plasma VLDL. Post-translationally, phosphorylated by FAM20C in the extracellular medium.

The protein resides in the secreted. The protein localises to the extracellular space. It localises to the extracellular matrix. Its subcellular location is the extracellular vesicle. It is found in the endosome. The protein resides in the multivesicular body. APOE is an apolipoprotein, a protein associating with lipid particles, that mainly functions in lipoprotein-mediated lipid transport between organs via the plasma and interstitial fluids. APOE is a core component of plasma lipoproteins and is involved in their production, conversion and clearance. Apolipoproteins are amphipathic molecules that interact both with lipids of the lipoprotein particle core and the aqueous environment of the plasma. As such, APOE associates with chylomicrons, chylomicron remnants, very low density lipoproteins (VLDL) and intermediate density lipoproteins (IDL) but shows a preferential binding to high-density lipoproteins (HDL). It also binds a wide range of cellular receptors including the LDL receptor/LDLR, the LDL receptor-related proteins LRP1, LRP2 and LRP8 and the very low-density lipoprotein receptor/VLDLR that mediate the cellular uptake of the APOE-containing lipoprotein particles. Finally, APOE also has a heparin-binding activity and binds heparan-sulfate proteoglycans on the surface of cells, a property that supports the capture and the receptor-mediated uptake of APOE-containing lipoproteins by cells. A main function of APOE is to mediate lipoprotein clearance through the uptake of chylomicrons, VLDLs, and HDLs by hepatocytes. APOE is also involved in the biosynthesis by the liver of VLDLs as well as their uptake by peripheral tissues ensuring the delivery of triglycerides and energy storage in muscle, heart and adipose tissues. By participating in the lipoprotein-mediated distribution of lipids among tissues, APOE plays a critical role in plasma and tissues lipid homeostasis. APOE is also involved in two steps of reverse cholesterol transport, the HDLs-mediated transport of cholesterol from peripheral tissues to the liver, and thereby plays an important role in cholesterol homeostasis. First, it is functionally associated with ABCA1 in the biogenesis of HDLs in tissues. Second, it is enriched in circulating HDLs and mediates their uptake by hepatocytes. APOE also plays an important role in lipid transport in the central nervous system, regulating neuron survival and sprouting. In Pan troglodytes (Chimpanzee), this protein is Apolipoprotein E (APOE).